Here is a 659-residue protein sequence, read N- to C-terminus: Exoribonuclease 2 (659 aa).

In terms of domain architecture, RNB spans 189 to 531 (RENLTALHFV…NHRLIKAVLA (343 aa)). In terms of domain architecture, S1 motif spans 576-658 (NVEFNAEVQD…ATRSIVGEIL (83 aa)).

The protein belongs to the RNR ribonuclease family. RNase II subfamily.

It localises to the cytoplasm. It catalyses the reaction Exonucleolytic cleavage in the 3'- to 5'-direction to yield nucleoside 5'-phosphates.. In terms of biological role, involved in mRNA degradation. Hydrolyzes single-stranded polyribonucleotides processively in the 3' to 5' direction. In Haemophilus influenzae (strain 86-028NP), this protein is Exoribonuclease 2.